Here is a 364-residue protein sequence, read N- to C-terminus: Peptide chain release factor 2 (364 aa).

Gln-251 carries the N5-methylglutamine modification.

Belongs to the prokaryotic/mitochondrial release factor family. Methylated by PrmC. Methylation increases the termination efficiency of RF2.

The protein localises to the cytoplasm. In terms of biological role, peptide chain release factor 2 directs the termination of translation in response to the peptide chain termination codons UGA and UAA. The chain is Peptide chain release factor 2 (prfB) from Buchnera aphidicola subsp. Schizaphis graminum (strain Sg).